A 1067-amino-acid chain; its full sequence is Zinc finger MIZ domain-containing protein 1 (1067 aa).

Residues 1–120 (MNSMDRHIQQ…HQKSRQSDPP (120 aa)) are sufficient for transactivation activity; sufficient for interaction with NOTCH1. Residue Lys-91 forms a Glycyl lysine isopeptide (Lys-Gly) (interchain with G-Cter in SUMO2) linkage. 2 disordered regions span residues 112–141 (QKSR…TLSH) and 327–542 (NSQF…PFPP). Positions 128 to 141 (PLSSMSSMKPTLSH) are enriched in low complexity. Polar residues predominate over residues 413-429 (YGNQQYGPNSQFPTQPG). Residues 431–440 (YPAPNPPRPL) show a composition bias toward pro residues. Over residues 479–497 (NNTFSGSSYSNYSQGNVNR) the composition is skewed to low complexity. Residues 510–521 (SPVPGNPTPPMT) show a composition bias toward pro residues. The SP-RING-type zinc-finger motif lies at 727–808 (GEDGVEQTAI…MWGILNAIQH (82 aa)). Zn(2+) is bound by residues Cys-758, His-760, Cys-781, and Cys-784. Residues Lys-834 and Lys-843 each participate in a glycyl lysine isopeptide (Lys-Gly) (interchain with G-Cter in SUMO2) cross-link. Positions 837-1067 (PDGIPSKRFK…DDLLSLFENN (231 aa)) are transactivation domain. A compositionally biased stretch (pro residues) spans 868–879 (GPSPYPLPPPPG). The segment at 868 to 1067 (GPSPYPLPPP…DDLLSLFENN (200 aa)) is disordered. Composition is skewed to polar residues over residues 881–895 (TNSN…NYQG) and 951–961 (SSDQPHPSIQQ). Positions 981-996 (APPPPPSQPPRQPPQA) are enriched in pro residues. The span at 1040–1067 (PDELLSYLDPPDLPSNSNDDLLSLFENN) shows a compositional bias: low complexity.

In terms of assembly, interacts with AR, but not with ESR1, NR3C1, PGR, THRB nor VDR. Interacts with NOTCH1 and RBPJ. Interacts with SMARCA4. Interacts (via SP-RING-type domain) with SMAD3 and SMAD4 (via MH2 domain). As to expression, expressed most abundantly in ovary and, at lower levels, in prostate, spleen and testis. Weak expression, if any, in thymus, small intestine, colon and peripheral blood leukocytes.

The protein localises to the nucleus. It localises to the nucleoplasm. It is found in the cytoplasm. Acts as a transcriptional coactivator. Increases ligand-dependent transcriptional activity of AR and promotes AR sumoylation. The stimulation of AR activity is dependent upon sumoylation. Also functions as a transcriptional coactivator in the TGF-beta signaling pathway by increasing the activity of the SMAD3/SMAD4 transcriptional complex. Involved in transcriptional activation of a subset of NOTCH1 target genes including MYC. Involved in thymocyte and T cell development. Involved in the regulation of postmitotic positioning of pyramidal neurons in the developing cerebral cortex. This chain is Zinc finger MIZ domain-containing protein 1, found in Homo sapiens (Human).